The chain runs to 374 residues: Chaperone protein DnaJ (374 aa).

The J domain maps to 5–70; sequence DYYEVLGVNL…RKRASYDQFG (66 aa). Residues 133–210 form a CR-type zinc finger; that stretch reads GLSRTIKVPT…CHGQGRQQQT (78 aa). 8 residues coordinate Zn(2+): cysteine 146, cysteine 149, cysteine 162, cysteine 165, cysteine 184, cysteine 187, cysteine 198, and cysteine 201. CXXCXGXG motif repeat units lie at residues 146-153, 162-169, 184-191, and 198-205; these read CKTCNGSG, CPRCNGSG, CSVCRGRG, and CTDCHGQG.

This sequence belongs to the DnaJ family. In terms of assembly, homodimer. It depends on Zn(2+) as a cofactor.

Its subcellular location is the cytoplasm. Its function is as follows. Participates actively in the response to hyperosmotic and heat shock by preventing the aggregation of stress-denatured proteins and by disaggregating proteins, also in an autonomous, DnaK-independent fashion. Unfolded proteins bind initially to DnaJ; upon interaction with the DnaJ-bound protein, DnaK hydrolyzes its bound ATP, resulting in the formation of a stable complex. GrpE releases ADP from DnaK; ATP binding to DnaK triggers the release of the substrate protein, thus completing the reaction cycle. Several rounds of ATP-dependent interactions between DnaJ, DnaK and GrpE are required for fully efficient folding. Also involved, together with DnaK and GrpE, in the DNA replication of plasmids through activation of initiation proteins. This is Chaperone protein DnaJ from Coxiella burnetii (strain RSA 331 / Henzerling II).